We begin with the raw amino-acid sequence, 96 residues long: Pore-forming peptide amoebapore B (96 aa).

Residues 1-19 (MRAIIFVLIFAIAFAATRE) form the signal peptide. One can recognise a Saposin B-type domain in the interval 20 to 96 (GAILCNLCKD…VVVCEKIHAC (77 aa)). 3 disulfide bridges follow: C24-C96, C27-C90, and C54-C65.

In terms of assembly, monomer. Homodimer. Hexamer; formed during insertion in the membrane.

It is found in the cytoplasmic granule. In terms of biological role, forms pores in the cell membrane of host cells. Has antibacterial activity against M.luteus, no activity against E.coli. Implicated in the cytolytic activity of the parasite. The polypeptide is Pore-forming peptide amoebapore B (Entamoeba histolytica (strain ATCC 30459 / HM-1:IMSS / ABRM)).